The primary structure comprises 157 residues: Ribonuclease H (157 aa).

The RNase H type-1 domain occupies 5-146 (IMKQVEIFTD…CDDLARTAAE (142 aa)). The Mg(2+) site is built by D14, E52, D74, and D138.

This sequence belongs to the RNase H family. As to quaternary structure, monomer. Mg(2+) serves as cofactor.

Its subcellular location is the cytoplasm. It catalyses the reaction Endonucleolytic cleavage to 5'-phosphomonoester.. Its function is as follows. Endonuclease that specifically degrades the RNA of RNA-DNA hybrids. This chain is Ribonuclease H, found in Aliivibrio salmonicida (strain LFI1238) (Vibrio salmonicida (strain LFI1238)).